The sequence spans 554 residues: Rab GTPase-binding effector protein 2 (554 aa).

A compositionally biased stretch (low complexity) spans 1 to 15; it reads MAAAPAALALDPQPQ. Disordered stretches follow at residues 1 to 29, 167 to 250, and 375 to 395; these read MAAAPAALALDPQPQEEQKDASESSELSR, IQRR…ETAS, and EQLPSSALQGSEQQEDQDEAL. Residues 15 to 173 adopt a coiled-coil conformation; that stretch reads QEEQKDASES…IQEIQRRPRQ (159 aa). Over residues 16-29 the composition is skewed to basic and acidic residues; that stretch reads EEQKDASESSELSR. A phosphoserine mark is found at Ser176, Ser180, Ser187, and Ser191. Residues 274–512 are a coiled coil; sequence DSQWEQLQVE…LETSEQVQRD (239 aa). Polar residues predominate over residues 377–386; it reads LPSSALQGSE.

The protein belongs to the rabaptin family. As to quaternary structure, heterodimer with RABGEF1. The dimer binds RAB5A that has been activated by GTP-binding. Interacts with SDCCAG8; this interaction is important for ciliogenesis regulation. Interacts with RAB4A; this interaction may mediate VEGFR2 cell surface expression.

It is found in the cytoplasm. It localises to the early endosome. The protein localises to the cytoskeleton. The protein resides in the microtubule organizing center. Its subcellular location is the centrosome. It is found in the cilium basal body. Its function is as follows. Plays a role in membrane trafficking and in homotypic early endosome fusion. Participates in arteriogenesis by regulating vascular endothelial growth factor receptor 2/VEGFR2 cell surface expression and endosomal trafficking. By interacting with SDCCAG8, localizes to centrosomes and plays a critical role in ciliogenesis. This Rattus norvegicus (Rat) protein is Rab GTPase-binding effector protein 2 (Rabep2).